Reading from the N-terminus, the 562-residue chain is Tissue-type plasminogen activator (562 aa).

Residues 1–22 form the signal peptide; the sequence is MDAMKRGLCCVLLLCGAVFVSP. A propeptide spanning residues 23-32 is cleaved from the precursor; sequence SQEIHARFRR. Positions 33–35 are cleaved as a propeptide — removed by plasmin; it reads GAR. The 43-residue stretch at 39–81 folds into the Fibronectin type-I domain; the sequence is VICRDEKTQMIYQQHQSWLRPVLRSNRVEYCWCNSGRAQCHSV. 17 cysteine pairs are disulfide-bonded: Cys-41/Cys-71, Cys-69/Cys-78, Cys-86/Cys-97, Cys-91/Cys-108, Cys-110/Cys-119, Cys-127/Cys-208, Cys-148/Cys-190, Cys-179/Cys-203, Cys-215/Cys-296, Cys-236/Cys-278, Cys-267/Cys-291, Cys-299/Cys-430, Cys-342/Cys-358, Cys-350/Cys-419, Cys-444/Cys-519, Cys-476/Cys-492, and Cys-509/Cys-537. Residues 42–52 are important for binding to annexin A2; the sequence is RDEKTQMIYQQ. One can recognise an EGF-like domain in the interval 82–120; it reads PVKSCSEPRCFNGGTCQQALYFSDFVCQCPEGFAGKCCE. Thr-96 carries an O-linked (Fuc) threonine glycan. Kringle domains follow at residues 127 to 208 and 215 to 296; these read CYED…TPAC and CYFG…VPSC. N-linked (GlcNAc...) asparagine glycosylation occurs at Asn-152. A glycan (N-linked (GlcNAc...) asparagine; partial) is linked at Asn-219. The Peptidase S1 domain occupies 311–561; sequence IKGGLFADIA…YLDWIRDNMR (251 aa). Catalysis depends on charge relay system residues His-357 and Asp-406. N-linked (GlcNAc...) asparagine glycosylation occurs at Asn-483. Ser-513 functions as the Charge relay system in the catalytic mechanism.

It belongs to the peptidase S1 family. As to quaternary structure, heterodimer of chain A and chain B held by a disulfide bond. Forms a heterodimer with SERPINA5. Binds to fibrin with high affinity. This interaction leads to an increase in the catalytic efficiency of the enzyme between 100-fold and 1000-fold, due to an increase in affinity for plasminogen. Similarly, binding to heparin increases the activation of plasminogen. Binds to annexin A2, cytokeratin-8, fibronectin and laminin. Binds to mannose receptor and the low-density lipoprotein receptor-related protein (LRP1); these proteins are involved in TPA clearance. Yet unidentified interactions on endothelial cells and vascular smooth muscle cells (VSMC) lead to a 100-fold stimulation of plasminogen activation. In addition, binding to VSMC reduces TPA inhibition by PAI-1 by 30-fold. Binds LRP1B; binding is followed by internalization and degradation. Interacts with SERPINE1. In complex with SERPINE1, interacts with SORL1. Interacts with apyrase from Anopheles gambiae saliva; the interaction results in PLAT activation probably via an allosteric activation mechanism. In terms of processing, the single chain, almost fully active enzyme, can be further processed into a two-chain fully active form by a cleavage after Arg-310 catalyzed by plasmin, tissue kallikrein or factor Xa. Differential cell-specific N-linked glycosylation gives rise to two glycoforms, type I (glycosylated at Asn-219) and type II (not glycosylated at Asn-219). The single chain type I glycoform is less readily converted into the two-chain form by plasmin, and the two-chain type I glycoform has a lower activity than the two-chain type II glycoform in the presence of fibrin. Post-translationally, N-glycosylation of Asn-152; the bound oligomannosidic glycan is involved in the interaction with the mannose receptor. In terms of processing, characterization of O-linked glycan was studied in Bowes melanoma cell line. In terms of tissue distribution, synthesized in numerous tissues (including tumors) and secreted into most extracellular body fluids, such as plasma, uterine fluid, saliva, gingival crevicular fluid, tears, seminal fluid, and milk.

It is found in the secreted. It localises to the extracellular space. The catalysed reaction is Specific cleavage of Arg-|-Val bond in plasminogen to form plasmin.. Its activity is regulated as follows. Inhibited by SERPINA5. Inhibited by SERPINE1. Converts the abundant, but inactive, zymogen plasminogen to plasmin by hydrolyzing a single Arg-Val bond in plasminogen. By controlling plasmin-mediated proteolysis, it plays an important role in tissue remodeling and degradation, in cell migration and many other physiopathological events. During oocyte activation, plays a role in cortical granule reaction in the zona reaction, which contributes to the block to polyspermy. The protein is Tissue-type plasminogen activator of Homo sapiens (Human).